Consider the following 182-residue polypeptide: Autophagy-related protein 31 (182 aa).

Positions 105-134 are disordered; sequence LTSGNDTGGDAGKKSGDISDPAAGPDVPRE.

It localises to the cytoplasm. The protein resides in the cytoskeleton. It is found in the preautophagosomal structure. Plays a role in starvation-induced autophagy. Involved in mitophagy. Functions with ATG17 and ATG29 at the preautophagosomal structure (PAS) in order to form normal autophagosomes under starvation conditions. May be involved in microtubule function, such as chromosome segregation and karyogamy. The chain is Autophagy-related protein 31 (CIS1) from Candida glabrata (strain ATCC 2001 / BCRC 20586 / JCM 3761 / NBRC 0622 / NRRL Y-65 / CBS 138) (Yeast).